A 263-amino-acid polypeptide reads, in one-letter code: Methylesterase 3 (263 aa).

Residue S85 is the Acyl-ester intermediate of the active site. Active-site charge relay system residues include D213 and H241.

This sequence belongs to the AB hydrolase superfamily. Methylesterase family.

It carries out the reaction methyl (indol-3-yl)acetate + H2O = (indol-3-yl)acetate + methanol + H(+). It catalyses the reaction methyl (-)-jasmonate + H2O = jasmonate + methanol + H(+). The protein operates within plant hormone biosynthesis. It functions in the pathway lipid metabolism; oxylipin biosynthesis. Functionally, methylesterase shown to have carboxylesterase activity, methyl indole-3-acetic acid (MeIAA) esterase activity and methyl jasmonate (MeJA) esterase activity in vitro. In Arabidopsis thaliana (Mouse-ear cress), this protein is Methylesterase 3.